The following is a 367-amino-acid chain: 2-aminoethylphosphonate--pyruvate transaminase (367 aa).

K194 carries the N6-(pyridoxal phosphate)lysine modification.

The protein belongs to the class-V pyridoxal-phosphate-dependent aminotransferase family. PhnW subfamily. As to quaternary structure, homodimer. It depends on pyridoxal 5'-phosphate as a cofactor.

It catalyses the reaction (2-aminoethyl)phosphonate + pyruvate = phosphonoacetaldehyde + L-alanine. Its function is as follows. Involved in phosphonate degradation. The polypeptide is 2-aminoethylphosphonate--pyruvate transaminase (Salmonella schwarzengrund (strain CVM19633)).